Here is a 376-residue protein sequence, read N- to C-terminus: Chaperone protein DnaJ (376 aa).

A J domain is found at 5–70 (DYYEILGVSK…QKRAAYDQYG (66 aa)). The CR-type zinc finger occupies 131 to 209 (GVTKEIRIPT…CHGHGRVERS (79 aa)). 8 residues coordinate Zn(2+): cysteine 144, cysteine 147, cysteine 161, cysteine 164, cysteine 183, cysteine 186, cysteine 197, and cysteine 200. CXXCXGXG motif repeat units lie at residues 144–151 (CDVCHGSG), 161–168 (CPTCHGSG), 183–190 (CPHCQGRG), and 197–204 (CNKCHGHG).

This sequence belongs to the DnaJ family. In terms of assembly, homodimer. Requires Zn(2+) as cofactor.

The protein resides in the cytoplasm. Functionally, participates actively in the response to hyperosmotic and heat shock by preventing the aggregation of stress-denatured proteins and by disaggregating proteins, also in an autonomous, DnaK-independent fashion. Unfolded proteins bind initially to DnaJ; upon interaction with the DnaJ-bound protein, DnaK hydrolyzes its bound ATP, resulting in the formation of a stable complex. GrpE releases ADP from DnaK; ATP binding to DnaK triggers the release of the substrate protein, thus completing the reaction cycle. Several rounds of ATP-dependent interactions between DnaJ, DnaK and GrpE are required for fully efficient folding. Also involved, together with DnaK and GrpE, in the DNA replication of plasmids through activation of initiation proteins. This chain is Chaperone protein DnaJ, found in Escherichia fergusonii (strain ATCC 35469 / DSM 13698 / CCUG 18766 / IAM 14443 / JCM 21226 / LMG 7866 / NBRC 102419 / NCTC 12128 / CDC 0568-73).